Here is a 1151-residue protein sequence, read N- to C-terminus: uncharacterized protein (1151 aa).

Disordered regions lie at residues 611 to 633, 709 to 740, 753 to 778, 795 to 880, and 1060 to 1151; these read FVKGDRSDSGGGPPPPPPPDEEE, NLVPVGESPMSAPDIDLPIPGLPGPQPQIMEV, PPILPIQPPLPLPAPPTPQEPPKSIL, PPVI…PPKL, and LKEP…TQQE. 2 stretches are compositionally biased toward pro residues: residues 754–773 and 811–842; these read PILPIQPPLPLPAPPTPQEP and IVPPSPAVVSPPSPTTIPQEPPTQPSPIPSQP. Residues 867–878 are compositionally biased toward low complexity; the sequence is PITPDTPAITPP. Over residues 1082 to 1091 the composition is skewed to acidic residues; sequence ESDNEDDELD. A compositionally biased stretch (polar residues) spans 1131 to 1142; it reads PVDTSDATKIST.

This is an uncharacterized protein from Ostreid herpesvirus 1 (isolate France) (OsHV-1).